The sequence spans 231 residues: tRNA1(Val) (adenine(37)-N6)-methyltransferase (231 aa).

The protein belongs to the methyltransferase superfamily. tRNA (adenine-N(6)-)-methyltransferase family.

It localises to the cytoplasm. The enzyme catalyses adenosine(37) in tRNA1(Val) + S-adenosyl-L-methionine = N(6)-methyladenosine(37) in tRNA1(Val) + S-adenosyl-L-homocysteine + H(+). In terms of biological role, specifically methylates the adenine in position 37 of tRNA(1)(Val) (anticodon cmo5UAC). The polypeptide is tRNA1(Val) (adenine(37)-N6)-methyltransferase (Flavobacteriaceae bacterium (strain 3519-10)).